The sequence spans 179 residues: Large ribosomal subunit protein uL6 (179 aa).

It belongs to the universal ribosomal protein uL6 family. Part of the 50S ribosomal subunit.

Functionally, this protein binds to the 23S rRNA, and is important in its secondary structure. It is located near the subunit interface in the base of the L7/L12 stalk, and near the tRNA binding site of the peptidyltransferase center. In Rhodococcus erythropolis (strain PR4 / NBRC 100887), this protein is Large ribosomal subunit protein uL6.